The primary structure comprises 285 residues: ATP phosphoribosyltransferase (285 aa).

Belongs to the ATP phosphoribosyltransferase family. Long subfamily. It depends on Mg(2+) as a cofactor.

Its subcellular location is the cytoplasm. It catalyses the reaction 1-(5-phospho-beta-D-ribosyl)-ATP + diphosphate = 5-phospho-alpha-D-ribose 1-diphosphate + ATP. It functions in the pathway amino-acid biosynthesis; L-histidine biosynthesis; L-histidine from 5-phospho-alpha-D-ribose 1-diphosphate: step 1/9. Its activity is regulated as follows. Feedback inhibited by histidine. Catalyzes the condensation of ATP and 5-phosphoribose 1-diphosphate to form N'-(5'-phosphoribosyl)-ATP (PR-ATP). Has a crucial role in the pathway because the rate of histidine biosynthesis seems to be controlled primarily by regulation of HisG enzymatic activity. This chain is ATP phosphoribosyltransferase, found in Sulfolobus acidocaldarius (strain ATCC 33909 / DSM 639 / JCM 8929 / NBRC 15157 / NCIMB 11770).